The chain runs to 67 residues: Alpha-conotoxin-like Qc1.1a (67 aa).

The first 21 residues, 1–21 (MGMRMMFTMFLLVVLAITVVS), serve as a signal peptide directing secretion. Positions 22–46 (FTSDHASDGRNTAANDKASNLMALR) are excised as a propeptide. Disulfide bonds link Cys-49-Cys-55 and Cys-50-Cys-63. The tract at residues 51–53 (PDP) is lacks the Ser-Xaa-Pro motif that is crucial for potent interaction with nAChR.

This sequence belongs to the conotoxin A superfamily. In terms of tissue distribution, expressed by the venom duct.

It localises to the secreted. Its function is as follows. Alpha-conotoxins act on postsynaptic membranes, they bind to the nicotinic acetylcholine receptors (nAChR) and thus inhibit them. Has possibly a distinct nAChR binding mode from other alpha-conotoxins, due to a different three residue motif (lacks the Ser-Xaa-Pro motif). This is Alpha-conotoxin-like Qc1.1a from Conus quercinus (Oak cone).